We begin with the raw amino-acid sequence, 286 residues long: Protein WVD2-like 1 (286 aa).

Residues 31–101 (ETDEEFEVKE…ENKKHIDDED (71 aa)) are disordered. Phosphothreonine is present on Thr32. Positions 38 to 47 (VKECTEEKSL) are enriched in basic and acidic residues. Positions 131–182 (AQRAEKRKEYYQKLEEKNQALEAERNELEQRQKDEQEAALKQLRKNLKFKAK) form a coiled coil. A disordered region spans residues 186-286 (NFYYEAPPAK…KPVNESSEEA (101 aa)). A compositionally biased stretch (polar residues) spans 234-247 (TVSNRNRHSTGTVQ).

This sequence belongs to the TPX2 family.

The protein localises to the cytoplasm. It localises to the cytoskeleton. Microtubule-associated protein (MAP) that regulates the orientation of interphase cortical microtubules. Modulates both rotational polarity and anisotropic cell expansion during organ growth. Promotes clockwise root and etiolated hypocotyls coiling, clockwise leaf curling, but left-handed petiole twisting. In Arabidopsis thaliana (Mouse-ear cress), this protein is Protein WVD2-like 1 (WDL1).